Reading from the N-terminus, the 61-residue chain is UPF0181 protein KPN78578_22920 (61 aa).

It belongs to the UPF0181 family.

The chain is UPF0181 protein KPN78578_22920 from Klebsiella pneumoniae subsp. pneumoniae (strain ATCC 700721 / MGH 78578).